The sequence spans 393 residues: Homeobox protein knotted-1-like 4 (393 aa).

Residues 1–13 are compositionally biased toward polar residues; the sequence is MAFHNNHFNHFTD. 2 disordered regions span residues 1–39 and 81–114; these read MAFH…PPNW and QRGN…EKKE. The ELK domain occupies 286 to 306; it reads ELKHELKQGYKEKIVDIREEI. Positions 307–370 form a DNA-binding region, homeobox; TALE-type; that stretch reads LRKRRAGKLP…NQRKRNWHSN (64 aa). Positions 363–393 are disordered; that stretch reads RKRNWHSNPSSSTVSKNKRRSNAGENSGRDR. Polar residues predominate over residues 368-377; the sequence is HSNPSSSTVS.

It belongs to the TALE/KNOX homeobox family. As to quaternary structure, may form heterodimeric complex with the TALE/BELL proteins. Interacts with OFP1, OFP2, OFP4 and OFP12. Interacts with KNATM-B.

Its subcellular location is the nucleus. The chain is Homeobox protein knotted-1-like 4 (KNAT4) from Arabidopsis thaliana (Mouse-ear cress).